The primary structure comprises 199 residues: Probable chemoreceptor glutamine deamidase CheD (199 aa).

Belongs to the CheD family.

It carries out the reaction L-glutaminyl-[protein] + H2O = L-glutamyl-[protein] + NH4(+). Functionally, probably deamidates glutamine residues to glutamate on methyl-accepting chemotaxis receptors (MCPs), playing an important role in chemotaxis. This is Probable chemoreceptor glutamine deamidase CheD from Cereibacter sphaeroides (strain ATCC 17029 / ATH 2.4.9) (Rhodobacter sphaeroides).